A 253-amino-acid polypeptide reads, in one-letter code: Trans-aconitate 2-methyltransferase (253 aa).

It belongs to the methyltransferase superfamily. Tam family.

Its subcellular location is the cytoplasm. The catalysed reaction is trans-aconitate + S-adenosyl-L-methionine = (E)-3-(methoxycarbonyl)pent-2-enedioate + S-adenosyl-L-homocysteine. Its function is as follows. Catalyzes the S-adenosylmethionine monomethyl esterification of trans-aconitate. The protein is Trans-aconitate 2-methyltransferase of Azoarcus sp. (strain BH72).